The following is a 41-amino-acid chain: Large ribosomal subunit protein bL36 (41 aa).

The protein belongs to the bacterial ribosomal protein bL36 family.

The protein is Large ribosomal subunit protein bL36 of Vibrio vulnificus (strain YJ016).